The following is a 291-amino-acid chain: Formamidopyrimidine-DNA glycosylase (291 aa).

The Schiff-base intermediate with DNA role is filled by P2. The active-site Proton donor is the E3. K58 functions as the Proton donor; for beta-elimination activity in the catalytic mechanism. Residues H100, R123, and K166 each coordinate DNA. The FPG-type zinc finger occupies S257–K291. The active-site Proton donor; for delta-elimination activity is the R281.

It belongs to the FPG family. As to quaternary structure, monomer. Zn(2+) serves as cofactor.

It catalyses the reaction Hydrolysis of DNA containing ring-opened 7-methylguanine residues, releasing 2,6-diamino-4-hydroxy-5-(N-methyl)formamidopyrimidine.. The enzyme catalyses 2'-deoxyribonucleotide-(2'-deoxyribose 5'-phosphate)-2'-deoxyribonucleotide-DNA = a 3'-end 2'-deoxyribonucleotide-(2,3-dehydro-2,3-deoxyribose 5'-phosphate)-DNA + a 5'-end 5'-phospho-2'-deoxyribonucleoside-DNA + H(+). Its function is as follows. Involved in base excision repair of DNA damaged by oxidation or by mutagenic agents. Acts as a DNA glycosylase that recognizes and removes damaged bases. Has a preference for oxidized purines, such as 7,8-dihydro-8-oxoguanine (8-oxoG). Has AP (apurinic/apyrimidinic) lyase activity and introduces nicks in the DNA strand. Cleaves the DNA backbone by beta-delta elimination to generate a single-strand break at the site of the removed base with both 3'- and 5'-phosphates. The polypeptide is Formamidopyrimidine-DNA glycosylase (Bartonella bacilliformis (strain ATCC 35685 / KC583 / Herrer 020/F12,63)).